The sequence spans 1187 residues: Carbamoyl phosphate synthase arginine-specific large chain, chloroplastic (1187 aa).

The N-terminal 62 residues, 1–62 (MRNHCLELSS…SSSFSTFPPC (62 aa)), are a transit peptide targeting the chloroplast. A carboxyphosphate synthetic domain region spans residues 93 to 494 (GKRTDLKKIM…SFQKALRSLE (402 aa)). Positions 220, 261, 267, 268, 300, 302, 307, 333, 334, 335, 377, and 391 each coordinate ATP. One can recognise an ATP-grasp 1 domain in the interval 224-420 (KDAMKNIGLK…IAKMAAKLSV (197 aa)). Positions 377, 391, and 393 each coordinate Mg(2+). The interval 495–644 (CGFSGWGCAK…YSSYDVECES (150 aa)) is oligomerization domain. Positions 645–1040 (APNNKKKVLI…SAFAMAQIAA (396 aa)) are carbamoyl phosphate synthetic domain. Residues 782–975 (NAILDELKIE…LAKYAALVMS (194 aa)) form the ATP-grasp 2 domain. 10 residues coordinate ATP: Arg818, Lys857, Leu859, Glu864, Gly890, Val891, His892, Ser893, Gln933, and Glu946. Mg(2+) is bound by residues Gln933, Glu946, and Asn948. The tract at residues 1041-1187 (GQKLPLSGTV…EVKNVSSLLV (147 aa)) is allosteric domain. The MGS-like domain maps to 1042–1183 (QKLPLSGTVF…QDFFEVKNVS (142 aa)).

It belongs to the CarB family. Heterodimer composed of 2 chains; the small (or glutamine) chain promotes the hydrolysis of glutamine to ammonia, which is used by the large (or ammonia) chain to synthesize carbamoyl phosphate. Requires Mg(2+) as cofactor. Mn(2+) is required as a cofactor. In terms of tissue distribution, expressed in roots and leaves.

The protein localises to the plastid. The protein resides in the chloroplast. It catalyses the reaction hydrogencarbonate + L-glutamine + 2 ATP + H2O = carbamoyl phosphate + L-glutamate + 2 ADP + phosphate + 2 H(+). It carries out the reaction hydrogencarbonate + NH4(+) + 2 ATP = carbamoyl phosphate + 2 ADP + phosphate + 2 H(+). Its pathway is amino-acid biosynthesis; L-arginine biosynthesis; carbamoyl phosphate from bicarbonate: step 1/1. Its function is as follows. Large subunit of the arginine-specific carbamoyl phosphate synthase (CPSase). CPSase catalyzes the formation of carbamoyl phosphate from the ammonia moiety of glutamine, hydrogencarbonate, and phosphate donated by ATP, constituting the first step of 2 biosynthetic pathways, one leading to arginine and/or urea and the other to pyrimidine nucleotides. The large subunit (synthetase) binds the substrates ammonia (free or transferred from glutamine from the small subunit), hydrogencarbonate and ATP and carries out an ATP-coupled ligase reaction, activating hydrogencarbonate by forming carboxy phosphate which reacts with ammonia to form carbamoyl phosphate. Required for mesophyll development. In Arabidopsis thaliana (Mouse-ear cress), this protein is Carbamoyl phosphate synthase arginine-specific large chain, chloroplastic (CARB).